The following is an 829-amino-acid chain: Protein SEY1 homolog 2 (829 aa).

The tract at residues 1 to 21 (MDEVSPTKHFTSKPLLPTKTP) is disordered. Residues 1 to 728 (MDEVSPTKHF…EKENSEIKYQ (728 aa)) are Cytoplasmic-facing. Residues 83-305 (GMDYNAVGIL…FLPQYNKEIP (223 aa)) enclose the GB1/RHD3-type G domain. 93–100 (GAQSSGKS) provides a ligand contact to GTP. 2 coiled-coil regions span residues 372–396 (KKIM…YMES) and 576–596 (DTIE…IKEL). A helical membrane pass occupies residues 729-749 (IPLYLIVLVIFFGFDEFIAIL). Residues 750-752 (TNP) lie on the Lumenal side of the membrane. A helical transmembrane segment spans residues 753-773 (LLFILTLIIGGGIYIGYKLNL). Topologically, residues 774–829 (GGVAKNYIQYLLSMSLSSTMEYLRTIPFFTPLIDKIWPKDDNKDDDSTEETQEETK) are cytoplasmic.

Belongs to the TRAFAC class dynamin-like GTPase superfamily. GB1/RHD3 GTPase family. RHD3 subfamily.

The protein resides in the endoplasmic reticulum membrane. Functionally, probable GTP-binding protein that may be involved in cell development. This chain is Protein SEY1 homolog 2, found in Entamoeba dispar (strain ATCC PRA-260 / SAW760).